The primary structure comprises 79 residues: Acyl carrier protein (79 aa).

The 76-residue stretch at 2 to 77 (SDIGERVKKI…DATKFLEKNA (76 aa)) folds into the Carrier domain. Ser-37 is modified (O-(pantetheine 4'-phosphoryl)serine).

Belongs to the acyl carrier protein (ACP) family. 4'-phosphopantetheine is transferred from CoA to a specific serine of apo-ACP by AcpS. This modification is essential for activity because fatty acids are bound in thioester linkage to the sulfhydryl of the prosthetic group.

The protein resides in the cytoplasm. Its pathway is lipid metabolism; fatty acid biosynthesis. In terms of biological role, carrier of the growing fatty acid chain in fatty acid biosynthesis. The chain is Acyl carrier protein from Bradyrhizobium diazoefficiens (strain JCM 10833 / BCRC 13528 / IAM 13628 / NBRC 14792 / USDA 110).